The primary structure comprises 209 residues: Large ribosomal subunit protein uL3 (209 aa).

A disordered region spans residues 133 to 153 (THGNSLSHRAPGSIGQNQTPG). Position 150 is an N5-methylglutamine (glutamine 150).

It belongs to the universal ribosomal protein uL3 family. In terms of assembly, part of the 50S ribosomal subunit. Forms a cluster with proteins L14 and L19. Methylated by PrmB.

In terms of biological role, one of the primary rRNA binding proteins, it binds directly near the 3'-end of the 23S rRNA, where it nucleates assembly of the 50S subunit. The chain is Large ribosomal subunit protein uL3 from Pectobacterium atrosepticum (strain SCRI 1043 / ATCC BAA-672) (Erwinia carotovora subsp. atroseptica).